The following is a 349-amino-acid chain: GATA zinc finger domain-containing protein 24 (349 aa).

Low complexity-rich tracts occupy residues 95–169 (NINR…VNKN) and 177–195 (NKSC…NNNS). 2 disordered regions span residues 95-227 (NINR…PVIK) and 250-294 (DYDY…KPVQ). The span at 196–212 (ENKEKNNINNNNEKENN) shows a compositional bias: basic and acidic residues. A compositionally biased stretch (low complexity) spans 257 to 272 (SNESSSPTLSASTLSS). The segment covering 278-289 (KVLKRGRGRPSK) has biased composition (basic residues). The segment at 295 to 323 (CFSCFRSNTPEWRKGKDKDGNVIDLCNAC) adopts a GATA-type zinc-finger fold.

The chain is GATA zinc finger domain-containing protein 24 (gtaX) from Dictyostelium discoideum (Social amoeba).